The following is a 256-amino-acid chain: uncharacterized protein (256 aa).

Disordered stretches follow at residues 1–38 (MGKT…PNRD) and 51–75 (PRPS…RCPQ).

This is an uncharacterized protein from Homo sapiens (Human).